The primary structure comprises 463 residues: Cysteine--tRNA ligase (463 aa).

A Zn(2+)-binding site is contributed by Cys30. A 'HIGH' region motif is present at residues Met32–His42. The Zn(2+) site is built by Cys214, His239, and Glu243. Positions Lys271–Ser275 match the 'KMSKS' region motif. Lys274 contributes to the ATP binding site.

Belongs to the class-I aminoacyl-tRNA synthetase family. Monomer. The cofactor is Zn(2+).

Its subcellular location is the cytoplasm. The catalysed reaction is tRNA(Cys) + L-cysteine + ATP = L-cysteinyl-tRNA(Cys) + AMP + diphosphate. This is Cysteine--tRNA ligase from Ralstonia pickettii (strain 12J).